The following is a 346-amino-acid chain: Phosphoribosylformylglycinamidine cyclo-ligase (346 aa).

Belongs to the AIR synthase family.

It is found in the cytoplasm. The catalysed reaction is 2-formamido-N(1)-(5-O-phospho-beta-D-ribosyl)acetamidine + ATP = 5-amino-1-(5-phospho-beta-D-ribosyl)imidazole + ADP + phosphate + H(+). Its pathway is purine metabolism; IMP biosynthesis via de novo pathway; 5-amino-1-(5-phospho-D-ribosyl)imidazole from N(2)-formyl-N(1)-(5-phospho-D-ribosyl)glycinamide: step 2/2. The sequence is that of Phosphoribosylformylglycinamidine cyclo-ligase from Bacillus cereus (strain G9842).